The primary structure comprises 476 residues: Bifunctional protein HldE (476 aa).

The tract at residues 1 to 319 (MAQYSAQFPH…NAIHGRTVSG (319 aa)) is ribokinase. 195–198 (NMSE) is an ATP binding site. Asp-264 is an active-site residue. The cytidylyltransferase stretch occupies residues 344-476 (MTNGCFDILH…VIKKIRDLKD (133 aa)).

It in the N-terminal section; belongs to the carbohydrate kinase PfkB family. This sequence in the C-terminal section; belongs to the cytidylyltransferase family. In terms of assembly, homodimer.

It catalyses the reaction D-glycero-beta-D-manno-heptose 7-phosphate + ATP = D-glycero-beta-D-manno-heptose 1,7-bisphosphate + ADP + H(+). The catalysed reaction is D-glycero-beta-D-manno-heptose 1-phosphate + ATP + H(+) = ADP-D-glycero-beta-D-manno-heptose + diphosphate. Its pathway is nucleotide-sugar biosynthesis; ADP-L-glycero-beta-D-manno-heptose biosynthesis; ADP-L-glycero-beta-D-manno-heptose from D-glycero-beta-D-manno-heptose 7-phosphate: step 1/4. It participates in nucleotide-sugar biosynthesis; ADP-L-glycero-beta-D-manno-heptose biosynthesis; ADP-L-glycero-beta-D-manno-heptose from D-glycero-beta-D-manno-heptose 7-phosphate: step 3/4. Functionally, catalyzes the phosphorylation of D-glycero-D-manno-heptose 7-phosphate at the C-1 position to selectively form D-glycero-beta-D-manno-heptose-1,7-bisphosphate. Its function is as follows. Catalyzes the ADP transfer from ATP to D-glycero-beta-D-manno-heptose 1-phosphate, yielding ADP-D-glycero-beta-D-manno-heptose. This chain is Bifunctional protein HldE, found in Actinobacillus succinogenes (strain ATCC 55618 / DSM 22257 / CCUG 43843 / 130Z).